A 326-amino-acid chain; its full sequence is 4-hydroxy-3-methylbut-2-enyl diphosphate reductase (326 aa).

Cysteine 22 provides a ligand contact to [4Fe-4S] cluster. Positions 51 and 84 each coordinate (2E)-4-hydroxy-3-methylbut-2-enyl diphosphate. Dimethylallyl diphosphate is bound by residues histidine 51 and histidine 84. Isopentenyl diphosphate is bound by residues histidine 51 and histidine 84. [4Fe-4S] cluster is bound at residue cysteine 106. (2E)-4-hydroxy-3-methylbut-2-enyl diphosphate is bound at residue histidine 134. Dimethylallyl diphosphate is bound at residue histidine 134. Histidine 134 contributes to the isopentenyl diphosphate binding site. Catalysis depends on glutamate 136, which acts as the Proton donor. Residue threonine 174 coordinates (2E)-4-hydroxy-3-methylbut-2-enyl diphosphate. Cysteine 204 serves as a coordination point for [4Fe-4S] cluster. The (2E)-4-hydroxy-3-methylbut-2-enyl diphosphate site is built by serine 232, serine 233, asparagine 234, and serine 276. Dimethylallyl diphosphate is bound by residues serine 232, serine 233, asparagine 234, and serine 276. 4 residues coordinate isopentenyl diphosphate: serine 232, serine 233, asparagine 234, and serine 276.

This sequence belongs to the IspH family. Requires [4Fe-4S] cluster as cofactor.

The catalysed reaction is isopentenyl diphosphate + 2 oxidized [2Fe-2S]-[ferredoxin] + H2O = (2E)-4-hydroxy-3-methylbut-2-enyl diphosphate + 2 reduced [2Fe-2S]-[ferredoxin] + 2 H(+). It catalyses the reaction dimethylallyl diphosphate + 2 oxidized [2Fe-2S]-[ferredoxin] + H2O = (2E)-4-hydroxy-3-methylbut-2-enyl diphosphate + 2 reduced [2Fe-2S]-[ferredoxin] + 2 H(+). It participates in isoprenoid biosynthesis; dimethylallyl diphosphate biosynthesis; dimethylallyl diphosphate from (2E)-4-hydroxy-3-methylbutenyl diphosphate: step 1/1. Its pathway is isoprenoid biosynthesis; isopentenyl diphosphate biosynthesis via DXP pathway; isopentenyl diphosphate from 1-deoxy-D-xylulose 5-phosphate: step 6/6. Catalyzes the conversion of 1-hydroxy-2-methyl-2-(E)-butenyl 4-diphosphate (HMBPP) into a mixture of isopentenyl diphosphate (IPP) and dimethylallyl diphosphate (DMAPP). Acts in the terminal step of the DOXP/MEP pathway for isoprenoid precursor biosynthesis. This Bordetella bronchiseptica (strain ATCC BAA-588 / NCTC 13252 / RB50) (Alcaligenes bronchisepticus) protein is 4-hydroxy-3-methylbut-2-enyl diphosphate reductase.